Here is a 361-residue protein sequence, read N- to C-terminus: tRNA 2-selenouridine synthase (361 aa).

The 124-residue stretch at 14–137 (LIADTPIIDV…LRQTAIQATI (124 aa)) folds into the Rhodanese domain. The active-site S-selanylcysteine intermediate is the Cys97.

This sequence belongs to the SelU family. Monomer.

The enzyme catalyses 5-methylaminomethyl-2-thiouridine(34) in tRNA + selenophosphate + (2E)-geranyl diphosphate + H2O + H(+) = 5-methylaminomethyl-2-selenouridine(34) in tRNA + (2E)-thiogeraniol + phosphate + diphosphate. It carries out the reaction 5-methylaminomethyl-2-thiouridine(34) in tRNA + (2E)-geranyl diphosphate = 5-methylaminomethyl-S-(2E)-geranyl-thiouridine(34) in tRNA + diphosphate. It catalyses the reaction 5-methylaminomethyl-S-(2E)-geranyl-thiouridine(34) in tRNA + selenophosphate + H(+) = 5-methylaminomethyl-2-(Se-phospho)selenouridine(34) in tRNA + (2E)-thiogeraniol. The catalysed reaction is 5-methylaminomethyl-2-(Se-phospho)selenouridine(34) in tRNA + H2O = 5-methylaminomethyl-2-selenouridine(34) in tRNA + phosphate. Involved in the post-transcriptional modification of the uridine at the wobble position (U34) of tRNA(Lys), tRNA(Glu) and tRNA(Gln). Catalyzes the conversion of 2-thiouridine (S2U-RNA) to 2-selenouridine (Se2U-RNA). Acts in a two-step process involving geranylation of 2-thiouridine (S2U) to S-geranyl-2-thiouridine (geS2U) and subsequent selenation of the latter derivative to 2-selenouridine (Se2U) in the tRNA chain. This chain is tRNA 2-selenouridine synthase, found in Escherichia coli O6:H1 (strain CFT073 / ATCC 700928 / UPEC).